The primary structure comprises 405 residues: Nicotinate phosphoribosyltransferase (405 aa).

H230 carries the post-translational modification Phosphohistidine; by autocatalysis.

The protein belongs to the NAPRTase family. Post-translationally, transiently phosphorylated on a His residue during the reaction cycle. Phosphorylation strongly increases the affinity for substrates and increases the rate of nicotinate D-ribonucleotide production. Dephosphorylation regenerates the low-affinity form of the enzyme, leading to product release.

It carries out the reaction nicotinate + 5-phospho-alpha-D-ribose 1-diphosphate + ATP + H2O = nicotinate beta-D-ribonucleotide + ADP + phosphate + diphosphate. It participates in cofactor biosynthesis; NAD(+) biosynthesis; nicotinate D-ribonucleotide from nicotinate: step 1/1. Catalyzes the synthesis of beta-nicotinate D-ribonucleotide from nicotinate and 5-phospho-D-ribose 1-phosphate at the expense of ATP. In Bordetella pertussis (strain Tohama I / ATCC BAA-589 / NCTC 13251), this protein is Nicotinate phosphoribosyltransferase.